The following is a 294-amino-acid chain: Bifunctional protein FolD (294 aa).

Residues 169-171 (GRG), T196, and V237 contribute to the NADP(+) site.

This sequence belongs to the tetrahydrofolate dehydrogenase/cyclohydrolase family. As to quaternary structure, homodimer.

The catalysed reaction is (6R)-5,10-methylene-5,6,7,8-tetrahydrofolate + NADP(+) = (6R)-5,10-methenyltetrahydrofolate + NADPH. It carries out the reaction (6R)-5,10-methenyltetrahydrofolate + H2O = (6R)-10-formyltetrahydrofolate + H(+). Its pathway is one-carbon metabolism; tetrahydrofolate interconversion. Functionally, catalyzes the oxidation of 5,10-methylenetetrahydrofolate to 5,10-methenyltetrahydrofolate and then the hydrolysis of 5,10-methenyltetrahydrofolate to 10-formyltetrahydrofolate. The sequence is that of Bifunctional protein FolD from Renibacterium salmoninarum (strain ATCC 33209 / DSM 20767 / JCM 11484 / NBRC 15589 / NCIMB 2235).